Reading from the N-terminus, the 649-residue chain is PH and SEC7 domain-containing protein 1 (649 aa).

2 disordered regions span residues 1–22 and 57–161; these read MPHS…PSAD and PGPT…LDST. Residues 70–88 are compositionally biased toward pro residues; that stretch reads PPQPPAPRPDPPAPAPLAP. The span at 120 to 132 shows a compositional bias: basic and acidic residues; the sequence is PRKELPSPSHSED. Positions 137 to 331 constitute an SEC7 domain; sequence GAAPLGSEPP…KALYSSIKNE (195 aa). S345 bears the Phosphoserine mark. The PH domain occupies 381–494; sequence AVYKHGALVR…WITRINVVAA (114 aa). Coiled-coil stretches lie at residues 523–549 and 581–608; these read LSQE…HRAA and AALL…AGST. The tract at residues 601-649 is disordered; that stretch reads ALAQAGSTEEGCPPPHSSPSLQPNPTSQPRAQRPGSEARAGAGSTRPKP. The segment covering 618–630 has biased composition (polar residues); that stretch reads SPSLQPNPTSQPR.

Belongs to the PSD family. In terms of assembly, interacts with ACTN1. Interacts (ARF6-bound form) with KCNK1; does not interact with KCNK1 in the absence of ARF6. Brain. Expressed in the hippocampal and dentate neuronal layers, cerebellar cortex, molecular layer of the hippocampus and dentate gyrus.

The protein localises to the cell membrane. Its subcellular location is the cell projection. It localises to the ruffle membrane. It is found in the cleavage furrow. Its function is as follows. Guanine nucleotide exchange factor for ARF6. Induces cytoskeletal remodeling. This chain is PH and SEC7 domain-containing protein 1 (Psd), found in Rattus norvegicus (Rat).